The chain runs to 1034 residues: MGDKRVVLNKDIFFQRAERLYELWETGQVGLDSVNSIAVAYGDSENPYTKSSALHSWLFGHEINDTALLFLKDHIYILGSNRKVEFFGTVTGVQYNGRVPPVSTLLRDKSDKDAGNFEKLIDYIKRAEGDLGSFVKEKFNSDFVNAWNDALKADDINKTDVSLAFMHLFAVKDDKELELVRKSAQVTTTSWTAARQRYVEIIDSERRVRHSVLSSEFSAYMKDPKIQQSLAKYNADTCYDPIVMSGGNYSFKWNHDNSEAHLHNQFGSIITSFGARLSDYCTNLTRTMLIFPSAELEAAYEAILAAEFAVIAALKPGVKLKDVYKIGVDTLTEKNPKLAETLNKKELGFATGIEFRESRLSINAKCEEVVKEGMVFIVYIGVDSIPNKNKGEKGKPAAIAISDTILVKAEGDNEVLTEKAKSRLKSNVIKFKEEQENRETERDTDQKKLLGRGQRSVVLNDQTRNKTTNEDLRKERQKELGKQLNLNAKARLSKQDGGTDEKKVKKSNVSYKNEERFPQDTDVQKMLIFVDRKYDSVIVPIFGIPVPFHISMIKNCSQSVEGDFTYLRINFATPGSQVGKDNAQFPHPLAHFMKELTFRASNIKEHHSDATPPSSNLSTAFRQIKEMQKRFRTEEAEEREKDGAVKQDKLILSQNKLNPKLKDLLIRPNIIQKRITGSLEAHTNGFRYTSLRGDRIDVLYNNIKHAFFQPCDNEMIILLHFHLKNPVMWGKKKYKDVQFYTEVGEITTDLGKYHHMQDRDDMHSEQQERELRRRLNTTFNSFCEKVSRLTNDQFEFDSPFAGLGFFGVPFRSATTLKPTASCLVNLTEWPPFIVTLSEVELVHFERVSLQLKNFDMVFIFKDYKMKTQMVAQIPMSSIDKIKEWLHTCDIWYSEGIQSLNWAKVMKTITDDPEDFFENGGWTFLDAESEGEDAGDDSDESDAYDPEEADASDGGSSSASDEDESEGEETESDDDEEGSLDSDESEGKDWSDLEEEAAKADKRREVEDGGRDRDRDRDRKRPSSSKAGPSHKRRK.

3 stretches are compositionally biased toward basic and acidic residues: residues 433 to 448 (EEQE…DQKK), 463 to 481 (TRNK…KELG), and 493 to 503 (SKQDGGTDEKK). The segment at 433-511 (EEQENRETER…KKVKKSNVSY (79 aa)) is disordered. Positions 617–642 (LSTAFRQIKEMQKRFRTEEAEEREKD) form a coiled coil. Acidic residues-rich tracts occupy residues 926 to 950 (AESE…EADA) and 959 to 983 (SDED…DSDE). Residues 926–1034 (AESEGEDAGD…KAGPSHKRRK (109 aa)) form a disordered region. The span at 984–1020 (SEGKDWSDLEEEAAKADKRREVEDGGRDRDRDRDRKR) shows a compositional bias: basic and acidic residues. The segment covering 1021-1034 (PSSSKAGPSHKRRK) has biased composition (basic residues).

Belongs to the peptidase M24 family. SPT16 subfamily. Component of the FACT complex, a stable heterodimer of spt-16 and hmg-3 or hmg-4.

It localises to the nucleus. It is found in the chromosome. Its function is as follows. Component of the FACT complex, a general chromatin factor that acts to reorganize nucleosomes. The FACT complex is involved in multiple processes that require DNA as a template such as mRNA elongation, DNA replication and DNA repair. During transcription elongation the FACT complex acts as a histone chaperone that both destabilizes and restores nucleosomal structure. It facilitates the passage of RNA polymerase II and transcription by promoting the dissociation of one histone H2A-H2B dimer from the nucleosome, then subsequently promotes the reestablishment of the nucleosome following the passage of RNA polymerase II. This Caenorhabditis briggsae protein is FACT complex subunit spt-16 (spt-16).